Reading from the N-terminus, the 320-residue chain is Lipoyl synthase (320 aa).

[4Fe-4S] cluster-binding residues include Cys-67, Cys-72, Cys-78, Cys-93, Cys-97, Cys-100, and Ser-307. Residues 79 to 296 (FNHGTATFMI…REKAAEMGFE (218 aa)) form the Radical SAM core domain.

This sequence belongs to the radical SAM superfamily. Lipoyl synthase family. Requires [4Fe-4S] cluster as cofactor.

Its subcellular location is the cytoplasm. The enzyme catalyses [[Fe-S] cluster scaffold protein carrying a second [4Fe-4S](2+) cluster] + N(6)-octanoyl-L-lysyl-[protein] + 2 oxidized [2Fe-2S]-[ferredoxin] + 2 S-adenosyl-L-methionine + 4 H(+) = [[Fe-S] cluster scaffold protein] + N(6)-[(R)-dihydrolipoyl]-L-lysyl-[protein] + 4 Fe(3+) + 2 hydrogen sulfide + 2 5'-deoxyadenosine + 2 L-methionine + 2 reduced [2Fe-2S]-[ferredoxin]. It participates in protein modification; protein lipoylation via endogenous pathway; protein N(6)-(lipoyl)lysine from octanoyl-[acyl-carrier-protein]: step 2/2. In terms of biological role, catalyzes the radical-mediated insertion of two sulfur atoms into the C-6 and C-8 positions of the octanoyl moiety bound to the lipoyl domains of lipoate-dependent enzymes, thereby converting the octanoylated domains into lipoylated derivatives. This chain is Lipoyl synthase, found in Actinobacillus succinogenes (strain ATCC 55618 / DSM 22257 / CCUG 43843 / 130Z).